We begin with the raw amino-acid sequence, 520 residues long: Calcium-dependent protein kinase 25 (520 aa).

Gly-2 is lipidated: N-myristoyl glycine. The disordered stretch occupies residues Pro-31–Asp-87. Basic and acidic residues predominate over residues Asn-47–Ala-72. Residues Tyr-132 to Ile-390 form the Protein kinase domain. ATP is bound by residues Leu-138–Thr-146 and Lys-161. Residue Asp-256 is the Proton acceptor of the active site. The residue at position 296 (Ser-296) is a Phosphoserine. The autoinhibitory domain stretch occupies residues Ala-396 to Ile-426. Residues Glu-433–Asn-468 enclose the EF-hand 1 domain. Positions 446, 450, 452, 457, 483, 487, 489, and 494 each coordinate Ca(2+). The EF-hand 2; degenerate domain occupies Leu-469–Ile-505.

It belongs to the protein kinase superfamily. Ser/Thr protein kinase family. CDPK subfamily.

It localises to the membrane. The catalysed reaction is L-seryl-[protein] + ATP = O-phospho-L-seryl-[protein] + ADP + H(+). It carries out the reaction L-threonyl-[protein] + ATP = O-phospho-L-threonyl-[protein] + ADP + H(+). Activated by calcium. Autophosphorylation may play an important role in the regulation of the kinase activity. Its function is as follows. May play a role in signal transduction pathways that involve calcium as a second messenger. The polypeptide is Calcium-dependent protein kinase 25 (CPK25) (Arabidopsis thaliana (Mouse-ear cress)).